A 195-amino-acid chain; its full sequence is ATP-dependent Clp protease proteolytic subunit (195 aa).

Serine 98 (nucleophile) is an active-site residue. Residue histidine 123 is part of the active site.

It belongs to the peptidase S14 family. In terms of assembly, fourteen ClpP subunits assemble into 2 heptameric rings which stack back to back to give a disk-like structure with a central cavity, resembling the structure of eukaryotic proteasomes.

It is found in the cytoplasm. The catalysed reaction is Hydrolysis of proteins to small peptides in the presence of ATP and magnesium. alpha-casein is the usual test substrate. In the absence of ATP, only oligopeptides shorter than five residues are hydrolyzed (such as succinyl-Leu-Tyr-|-NHMec, and Leu-Tyr-Leu-|-Tyr-Trp, in which cleavage of the -Tyr-|-Leu- and -Tyr-|-Trp bonds also occurs).. Its function is as follows. Cleaves peptides in various proteins in a process that requires ATP hydrolysis. Has a chymotrypsin-like activity. Plays a major role in the degradation of misfolded proteins. This Staphylococcus aureus (strain Mu3 / ATCC 700698) protein is ATP-dependent Clp protease proteolytic subunit.